The following is a 347-amino-acid chain: Heat-inducible transcription repressor HrcA (347 aa).

Belongs to the HrcA family.

Its function is as follows. Negative regulator of class I heat shock genes (grpE-dnaK-dnaJ and groELS operons). Prevents heat-shock induction of these operons. The sequence is that of Heat-inducible transcription repressor HrcA from Lactiplantibacillus plantarum (strain ATCC BAA-793 / NCIMB 8826 / WCFS1) (Lactobacillus plantarum).